A 106-amino-acid polypeptide reads, in one-letter code: uncharacterized protein (106 aa).

Its subcellular location is the mitochondrion. This is an uncharacterized protein from Arabidopsis thaliana (Mouse-ear cress).